The primary structure comprises 138 residues: MRTLWIMAVLLVGVEGSLIEFAKMILEETKRLPFPYYTTYGCYCGWGGQGQPKDATDRCCFVHDCCYGKLSNCKPKTDRYSYSRKSGVIICGEGTPCEKQICECDKAAAVCFRENLRTYKKRYMAYPDLLCKKPAEKC.

A signal peptide spans 1 to 16; sequence MRTLWIMAVLLVGVEG. Intrachain disulfides connect Cys-42/Cys-131, Cys-44/Cys-60, Cys-59/Cys-111, Cys-65/Cys-138, Cys-66/Cys-104, Cys-73/Cys-97, and Cys-91/Cys-102. Positions 43, 45, and 47 each coordinate Ca(2+). His-63 is an active-site residue. Asp-64 lines the Ca(2+) pocket. The active site involves Asp-105.

The protein belongs to the phospholipase A2 family. Group II subfamily. D49 sub-subfamily. Monomer. Homodimer; non-covalently linked (alternative/compact dimer conformation). Requires Ca(2+) as cofactor. In terms of tissue distribution, expressed by the venom gland.

The protein resides in the secreted. The catalysed reaction is a 1,2-diacyl-sn-glycero-3-phosphocholine + H2O = a 1-acyl-sn-glycero-3-phosphocholine + a fatty acid + H(+). Its activity is regulated as follows. High level of membrane cholesterol content reduces cytolytic activity, whereas low level of membrane cholesterol content increases cytolytic activity. Snake venom phospholipase A2 (PLA2) that displays local myotoxic activity. It also displays anticoagulant action in plasma and edema-inducing activities. In addition, it shows cytotoxic activity to a variety of cell types and bactericidal activity to a variety of Gram-negative and Gram-positive bacteria. PLA2 catalyzes the calcium-dependent hydrolysis of the 2-acyl groups in 3-sn-phosphoglycerides. This Bothrops asper (Terciopelo) protein is Basic phospholipase A2 myotoxin I.